Reading from the N-terminus, the 243-residue chain is Uridylate kinase (243 aa).

ATP is bound at residue 15–18 (KMSG). Glycine 57 is a binding site for UMP. 2 residues coordinate ATP: glycine 58 and arginine 62. Residues aspartate 77 and 138–145 (TGNPLVTT) each bind UMP. ATP is bound by residues threonine 165, asparagine 166, tyrosine 171, and aspartate 174.

This sequence belongs to the UMP kinase family. Homohexamer.

The protein localises to the cytoplasm. It catalyses the reaction UMP + ATP = UDP + ADP. The protein operates within pyrimidine metabolism; CTP biosynthesis via de novo pathway; UDP from UMP (UMPK route): step 1/1. With respect to regulation, inhibited by UTP. In terms of biological role, catalyzes the reversible phosphorylation of UMP to UDP. The sequence is that of Uridylate kinase from Coxiella burnetii (strain RSA 493 / Nine Mile phase I).